The chain runs to 1083 residues: Phospholipase D beta 1 (1083 aa).

Pro residues-rich tracts occupy residues 26–38, 46–66, and 132–148; these read RPPS…PPPT, YPYP…PPPH, and QYPP…PPPQ. The disordered stretch occupies residues 26–231; it reads RPPSSEPYPP…PNSSFPSNSH (206 aa). Composition is skewed to polar residues over residues 191-213 and 222-231; these read ISTN…SWQS and PNSSFPSNSH. The C2 domain maps to 252 to 393; the sequence is HSADMQMTLF…YSGAKIEGTY (142 aa). Aspartate 455 is a Ca(2+) binding site. The PLD phosphodiesterase 1 domain occupies 595-630; sequence TIYTHHQKNVIVDADAGGNRRKIIAFVGGLDLCDGR. Active-site residues include histidine 600, lysine 602, and aspartate 607. An a 1,2-diacyl-sn-glycero-3-phosphate-binding site is contributed by histidine 600. Ca(2+) contacts are provided by histidine 636 and histidine 668. The a 1,2-diacyl-sn-glycero-3-phosphate site is built by glutamine 796 and histidine 934. The 28-residue stretch at 929 to 956 folds into the PLD phosphodiesterase 2 domain; sequence FMVYVHSKGMVVDDEYVVIGSANINQRS. Residues histidine 934, lysine 936, and aspartate 941 contribute to the active site. Glutamate 997 contributes to the Ca(2+) binding site.

The protein belongs to the phospholipase D family. C2-PLD subfamily. Ca(2+) is required as a cofactor. As to expression, expressed in stems, and to a lower amount in leaves, flowers and siliques.

It localises to the cytoplasm. The protein resides in the membrane. It carries out the reaction a 1,2-diacyl-sn-glycero-3-phosphocholine + H2O = a 1,2-diacyl-sn-glycero-3-phosphate + choline + H(+). Inhibited by neomycin. Up-regulated by PIP2 binding. In terms of biological role, hydrolyzes glycerol-phospholipids at the terminal phosphodiesteric bond to generate phosphatidic acids (PA). Plays an important role in various cellular processes, including phytohormone action, vesicular trafficking, secretion, cytoskeletal arrangement, meiosis, tumor promotion, pathogenesis, membrane deterioration and senescence. Involved in regulating stomatal movement and plant-water status. Can use phosphatidylserine (PS) and phosphatidylethanolamine (PE) as substrates only in the presence of PIP2. Can use phosphatidylcholine (PC), phosphatidylglycerol (PG) or N-acylphosphatidylethanolamine (NAPE) as substrates in the presence of PE and PIP2. Modulates defense responses to bacterial and fungal pathogens. The chain is Phospholipase D beta 1 from Arabidopsis thaliana (Mouse-ear cress).